A 92-amino-acid chain; its full sequence is Elongation factor 1-beta (92 aa).

Belongs to the EF-1-beta/EF-1-delta family.

Promotes the exchange of GDP for GTP in EF-1-alpha/GDP, thus allowing the regeneration of EF-1-alpha/GTP that could then be used to form the ternary complex EF-1-alpha/GTP/AAtRNA. The protein is Elongation factor 1-beta of Pyrobaculum calidifontis (strain DSM 21063 / JCM 11548 / VA1).